Consider the following 1150-residue polypeptide: Protogenin (1150 aa).

A signal peptide spans 1–35 (MAPPLRPLARLRPPGMLLRALLLLLLLSPLPGVWC). 4 consecutive Ig-like domains span residues 36–130 (FSEL…AHLA), 135–222 (SAFE…ASLT), 235–322 (PTII…ATLT), and 327–411 (PSFV…ARLT). Over 36 to 949 (FSELSFVKEP…YYHLDQKSMT (914 aa)) the chain is Extracellular. 4 disulfides stabilise this stretch: Cys-60-Cys-113, Cys-156-Cys-205, Cys-256-Cys-304, and Cys-348-Cys-395. N-linked (GlcNAc...) asparagine glycosylation is present at Asn-90. Fibronectin type-III domains follow at residues 421 to 515 (APYN…TLED), 517 to 613 (PLRP…TPKA), 618 to 717 (APKS…VRDR), 724 to 817 (PPHH…TLPE), and 822 to 917 (PPVG…VLPK). N-linked (GlcNAc...) asparagine glycosylation is present at Asn-488. A glycan (N-linked (GlcNAc...) asparagine) is linked at Asn-630. Residues 950-970 (GIAVGVGIALTCILICVLILI) form a helical membrane-spanning segment. Residues 971 to 1150 (YRSKARKSSA…SVISTTPPNL (180 aa)) are Cytoplasmic-facing. Disordered regions lie at residues 981–1002 (SKTA…ASGN) and 1086–1150 (ISDE…PPNL). 2 stretches are compositionally biased toward polar residues: residues 983–1000 (TAQN…SLAS) and 1092–1102 (PSSPGQTTSFS). A compositionally biased stretch (basic and acidic residues) spans 1110-1138 (DTEHSANSEGSHETGDSGRFSHESNDEIH). Positions 1141-1150 (SVISTTPPNL) are enriched in polar residues.

This sequence belongs to the immunoglobulin superfamily. DCC family.

The protein resides in the membrane. Its function is as follows. May play a role in anteroposterior axis elongation. The sequence is that of Protogenin from Homo sapiens (Human).